A 139-amino-acid chain; its full sequence is GSK3B-interacting protein (139 aa).

Residues 41–45 (VNDVL) form a required for PRKAR2A interaction; contributes to a protective effect against H(2)O(2)-induced apoptosis region. The segment at 115–139 (SPAYREAFGNALLQRLEALKRDGQS) is interaction with GSK3B and acts as a GSK3B inhibitor.

It belongs to the GSKIP family. Forms a complex composed of PRKAR2A or PRKAR2B, GSK3B and GSKIP through GSKIP interaction; facilitates PKA-induced phosphorylation of GSK3B leading to GSK3B inactivation; recruits DNM1L through GSK3B for PKA-mediated phosphorylation of DNM1L; promotes beta-catenin degradation through GSK3B-induced phosphorylation of beta-catenin; stabilizes beta-catenin and enhances Wnt-induced signaling through PKA-induced phosphorylation of beta-catenin. Interacts with GSK3B; induces GSK3B-mediated phosphorylation of GSKIP and inhibits GSK3B kinase activity. Phosphorylated by GSK3B.

Its subcellular location is the cytoplasm. The protein resides in the nucleus. In terms of biological role, A-kinase anchoring protein for GSK3B and PKA that regulates or facilitates their kinase activity towards their targets. The ternary complex enhances Wnt-induced signaling by facilitating the GSK3B- and PKA-induced phosphorylation of beta-catenin leading to beta-catenin degradation and stabilization respectively. Upon cAMP activation, the ternary complex contributes to neuroprotection against oxidative stress-induced apoptosis by facilitating the PKA-induced phosphorylation of DML1 and PKA-induced inactivation of GSK3B. During neurite outgrowth promotes neuron proliferation; while increases beta-catenin-induced transcriptional activity through GSK3B kinase activity inhibition, reduces N-cadherin level to promote cell cycle progression. May play a role in cleft palate formation and is required for postnatal life through modulation of the activity of GSK3B during development. The polypeptide is GSK3B-interacting protein (Mus musculus (Mouse)).